A 762-amino-acid chain; its full sequence is 5-methyltetrahydropteroyltriglutamate--homocysteine methyltransferase (762 aa).

Residues 17–20 (REWK) and K111 contribute to the 5-methyltetrahydropteroyltri-L-glutamate site. Residues 435-437 (IGS) and E488 contribute to the L-homocysteine site. L-methionine contacts are provided by residues 435 to 437 (IGS) and E488. Residues 519-520 (RC) and W565 each bind 5-methyltetrahydropteroyltri-L-glutamate. An L-homocysteine-binding site is contributed by D603. Residue D603 coordinates L-methionine. A 5-methyltetrahydropteroyltri-L-glutamate-binding site is contributed by E609. The Zn(2+) site is built by H645, C647, and E669. H698 (proton donor) is an active-site residue. Zn(2+) is bound at residue C730.

This sequence belongs to the vitamin-B12 independent methionine synthase family. The cofactor is Zn(2+).

It catalyses the reaction 5-methyltetrahydropteroyltri-L-glutamate + L-homocysteine = tetrahydropteroyltri-L-glutamate + L-methionine. It participates in amino-acid biosynthesis; L-methionine biosynthesis via de novo pathway; L-methionine from L-homocysteine (MetE route): step 1/1. Functionally, catalyzes the transfer of a methyl group from 5-methyltetrahydrofolate to homocysteine resulting in methionine formation. The polypeptide is 5-methyltetrahydropteroyltriglutamate--homocysteine methyltransferase (Bacillus thuringiensis subsp. konkukian (strain 97-27)).